The chain runs to 304 residues: 17-beta-hydroxysteroid dehydrogenase 13 (304 aa).

The first 19 residues, 1–19 (MNLILEFLLLVGVIIYSYL), serve as a signal peptide directing secretion. A Phosphoserine modification is found at Ser33. 40–67 (LITGAGHGIGRLTAYEFAKQKSRLVLWD) lines the NAD(+) pocket. An N6-acetyllysine modification is found at Lys79. Ser172 provides a ligand contact to substrate. The active-site Proton acceptor is the Tyr185. NAD(+) is bound at residue Lys189. The interval 276 to 304 (SSKHPHGGSQQPVTPIPGDLTPSSDFLKH) is disordered.

The protein belongs to the short-chain dehydrogenases/reductases (SDR) family. In terms of tissue distribution, expressed predominantly in the liver (at protein level).

It localises to the lipid droplet. Its subcellular location is the endoplasmic reticulum. The catalysed reaction is 17beta-estradiol + NAD(+) = estrone + NADH + H(+). It catalyses the reaction all-trans-retinol + NAD(+) = all-trans-retinal + NADH + H(+). The enzyme catalyses all-trans-retinal + NAD(+) + H2O = all-trans-retinoate + NADH + 2 H(+). Plays a pivotal role in hepatic lipid metabolism. In vitro, it catalyzes the oxidation of a variety of lipid substrates, including 17beta-estradiol, retinol, retinal, and leukotriene B4. The polypeptide is 17-beta-hydroxysteroid dehydrogenase 13 (Hsd17b13) (Mus musculus (Mouse)).